The sequence spans 596 residues: Aspartate--tRNA(Asp/Asn) ligase (596 aa).

E175 is a binding site for L-aspartate. The interval Q199–K202 is aspartate. L-aspartate-binding residues include R221 and H454. Residue R221–E223 coordinates ATP. E488 contributes to the ATP binding site. R495 contacts L-aspartate. Residue G540 to R543 participates in ATP binding.

The protein belongs to the class-II aminoacyl-tRNA synthetase family. Type 1 subfamily. Homodimer.

It is found in the cytoplasm. It carries out the reaction tRNA(Asx) + L-aspartate + ATP = L-aspartyl-tRNA(Asx) + AMP + diphosphate. In terms of biological role, aspartyl-tRNA synthetase with relaxed tRNA specificity since it is able to aspartylate not only its cognate tRNA(Asp) but also tRNA(Asn). Reaction proceeds in two steps: L-aspartate is first activated by ATP to form Asp-AMP and then transferred to the acceptor end of tRNA(Asp/Asn). This is Aspartate--tRNA(Asp/Asn) ligase from Mesorhizobium japonicum (strain LMG 29417 / CECT 9101 / MAFF 303099) (Mesorhizobium loti (strain MAFF 303099)).